We begin with the raw amino-acid sequence, 643 residues long: MNPNTPADVYYGQMSQGSSMPVTTVPSHSHYASQQPPPLLQPGSTYAHQYGTPQYGYANALSSPASIPPSLPPSMNSMAGQSVLPLPGSGSMNPAVYASGGFDTTGQVAPPGMKPRVTATLWEDEGSLCFQVEARGICVARREDNAMINGTKLLNVAGMTRGRRDGILKSEKVRHVVKIGPMHLKGVWIPFERALDFANKEKITELLYPLFVHNIGALLYHPTNQSRTSQVMAAAEQRRKDSHGQLRGPPGLPSLQQHHHHHSMLPGPPSLPSHPSMGRPALDRAHTFPTPPTSASSVMGPMGNSDGYQWSQQSMSGTQGNSSLSLDTSLGSNARSMPSTPATTPPGSTIQSMQNYPPVSQSYESSRQMYQGQSAQQAQYQSQQHYSSQPQHQERPVYSQSSYIKNDMGPPSGRPTGQSNDASDSKPPTGMIHQGQGQSDPGTHAGSEEDDDANNEAEYTHDSGGYDANRGSYNYNTQAVNSLPHDHGLAPEIGGSPHQAGSGRATPRTAAAPSSYYSAQGYHTPPRGQPSSSLYNVMSNERTGSNGTQGNEMYAGQADMPSSLPNGYSAQPSVMNGSSGGLKRGRDDDDDGGRPTTSAPNLGPGMDMKRRKTMMDGGSLPSPTYTATIAQAAPSAIAAHRRR.

The tract at residues 1-37 (MNPNTPADVYYGQMSQGSSMPVTTVPSHSHYASQQPP) is disordered. The segment covering 13–33 (QMSQGSSMPVTTVPSHSHYAS) has biased composition (polar residues). The HTH APSES-type domain maps to 116 to 222 (RVTATLWEDE…HNIGALLYHP (107 aa)). The H-T-H motif DNA-binding region spans 150–171 (GTKLLNVAGMTRGRRDGILKSE). The interval 229–627 (SQVMAAAEQR…GSLPSPTYTA (399 aa)) is disordered. Over residues 306 to 335 (DGYQWSQQSMSGTQGNSSLSLDTSLGSNAR) the composition is skewed to polar residues. Over residues 336 to 349 (SMPSTPATTPPGST) the composition is skewed to low complexity. The span at 350 to 367 (IQSMQNYPPVSQSYESSR) shows a compositional bias: polar residues. Low complexity predominate over residues 368-391 (QMYQGQSAQQAQYQSQQHYSSQPQ). Composition is skewed to polar residues over residues 471 to 481 (GSYNYNTQAVN), 529 to 551 (QPSS…TQGN), and 563 to 577 (SLPN…VMNG). A nuclear localization domain region spans residues 583-612 (KRGRDDDDDGGRPTTSAPNLGPGMDMKRRK).

The protein belongs to the EFG1/PHD1/stuA family.

The protein localises to the nucleus. Transcription factor that regulates asexual reproduction. Binds the StuA-response elements (StRE) with the consensus sequence 5'-(A/T)CGCG(T/A)N(A/C)-3' at the promoters of target genes. Required for rapid conidial germination, normal vegetative morphology, and protoperithecium formation. In Neurospora crassa (strain ATCC 24698 / 74-OR23-1A / CBS 708.71 / DSM 1257 / FGSC 987), this protein is Cell pattern formation-associated protein asm-1.